Reading from the N-terminus, the 303-residue chain is MKLTYQFFIFWFFLPFFAISGDDDYKNLIFKGCANQKSPDPTGVFSQNLKNLFTSLVSQSSQSSFASVTSGTDNTTAVIGVFQCRGDLQNAQCYDCVSKIPKLVSKLCGGGRDDGNVVAARVHLAGCYIRYESSGFRQTSGTEMLFRVCGKKDSNDPGFVGKRETAFGMAENGVKTGSSGGGGGGGGFYAGQYESVYVLGQCEGSLGNSDCGECVKDGFEKAKSECGESNSGQVYLQKCFVSYSYYSHGVPNIEPLSGGEKRQHTERTIALAVGGVFVLGFVIVCLLVLRSAMKKKSNKYDAY.

Positions 1–21 (MKLTYQFFIFWFFLPFFAISG) are cleaved as a signal peptide. Topologically, residues 22–268 (DDDYKNLIFK…GEKRQHTERT (247 aa)) are extracellular. Gnk2-homologous domains are found at residues 27–136 (NLIF…SSGF) and 141–248 (GTEM…YYSH). Disulfide bonds link Cys33–Cys108, Cys84–Cys93, Cys96–Cys127, Cys149–Cys226, Cys202–Cys211, and Cys214–Cys239. Residues 269-289 (IALAVGGVFVLGFVIVCLLVL) traverse the membrane as a helical segment. The tract at residues 269–289 (IALAVGGVFVLGFVIVCLLVL) is necessary and sufficient for plasmodesmal targeting. At 290–303 (RSAMKKKSNKYDAY) the chain is on the cytoplasmic side.

It belongs to the cysteine-rich repeat secretory protein family. Plasmodesmata-located proteins (PDLD) subfamily. Interacts with AZI1. Interacts with PDLP5. Does not interact with DIR1. In terms of assembly, (Microbial infection) Interacts with Grapevine fanleaf virus (GFLV) 2B-MP. Interacts with Cauliflower mosaic virus (CaMV) movement protein. Highly expressed in cell suspension. Expressed in epidermal and spongy mesophyll cells, and the cell wall interface at the base of the leaf trichome (at protein level). Expressed in haustoria-containing cells.

The protein localises to the cell membrane. Its subcellular location is the cell junction. It is found in the plasmodesma. Its function is as follows. Modulates cell-to-cell trafficking. Required for systemic acquired resistance (SAR) which is mediated by the signaling molecules azelaic acid (AzA), glycerol-3-phosphate (G3P), and salicylic acid (SA). Required for the proper localization and stability of AZI1 which is involved in SAR. Mediates callose deposition during downy mildew fungal infection around haustoria. Haustoria are unicellular protrusions from hyphae and function as the site of molecular exchange of nutrients and effectors between host and pathogen. In Arabidopsis thaliana (Mouse-ear cress), this protein is Plasmodesmata-located protein 1.